The following is a 481-amino-acid chain: UDP-N-acetylmuramoyl-L-alanyl-D-glutamate--L-lysine ligase (481 aa).

Ser-42 lines the UDP-N-acetyl-alpha-D-muramoyl-L-alanyl-D-glutamate pocket. Residue 118–124 (GTKGKTT) coordinates ATP. UDP-N-acetyl-alpha-D-muramoyl-L-alanyl-D-glutamate is bound by residues 160–161 (TT), Ser-187, and Arg-195. Lys-229 is subject to N6-carboxylysine. Residues 404-407 (DDPN) carry the L-lysine recognition motif motif.

It belongs to the MurCDEF family. MurE subfamily. Post-translationally, carboxylation is probably crucial for Mg(2+) binding and, consequently, for the gamma-phosphate positioning of ATP.

The protein localises to the cytoplasm. It carries out the reaction UDP-N-acetyl-alpha-D-muramoyl-L-alanyl-D-glutamate + L-lysine + ATP = UDP-N-acetyl-alpha-D-muramoyl-L-alanyl-gamma-D-glutamyl-L-lysine + ADP + phosphate + H(+). It participates in cell wall biogenesis; peptidoglycan biosynthesis. Functionally, catalyzes the addition of L-lysine to the nucleotide precursor UDP-N-acetylmuramoyl-L-alanyl-D-glutamate (UMAG) in the biosynthesis of bacterial cell-wall peptidoglycan. This is UDP-N-acetylmuramoyl-L-alanyl-D-glutamate--L-lysine ligase from Streptococcus sanguinis (strain SK36).